The following is a 155-amino-acid chain: Interleukin-2 (155 aa).

A signal peptide spans 1–20 (MYKMQLVACIALSLVLITNS). Threonine 23 is a glycosylation site (O-linked (GalNAc...) threonine). An intrachain disulfide couples cysteine 77 to cysteine 125.

This sequence belongs to the IL-2 family.

Its subcellular location is the secreted. In terms of biological role, cytokine produced by activated CD4-positive helper T-cells and to a lesser extend activated CD8-positive T-cells and natural killer (NK) cells that plays pivotal roles in the immune response and tolerance. Binds to a receptor complex composed of either the high-affinity trimeric IL-2R (IL2RA/CD25, IL2RB/CD122 and IL2RG/CD132) or the low-affinity dimeric IL-2R (IL2RB and IL2RG). Interaction with the receptor leads to oligomerization and conformation changes in the IL-2R subunits resulting in downstream signaling starting with phosphorylation of JAK1 and JAK3. In turn, JAK1 and JAK3 phosphorylate the receptor to form a docking site leading to the phosphorylation of several substrates including STAT5. This process leads to activation of several pathways including STAT, phosphoinositide-3-kinase/PI3K and mitogen-activated protein kinase/MAPK pathways. Functions as a T-cell growth factor and can increase NK-cell cytolytic activity as well. Promotes strong proliferation of activated B-cells and subsequently immunoglobulin production. Plays a pivotal role in regulating the adaptive immune system by controlling the survival and proliferation of regulatory T-cells, which are required for the maintenance of immune tolerance. Moreover, participates in the differentiation and homeostasis of effector T-cell subsets, including Th1, Th2, Th17 as well as memory CD8-positive T-cells. The protein is Interleukin-2 (IL2) of Dasypus novemcinctus (Nine-banded armadillo).